The sequence spans 388 residues: Dual-specificity RNA methyltransferase RlmN (388 aa).

The active-site Proton acceptor is the Glu-109. Residues 115 to 354 (EDDRATLCVS…TIVRKTRGDD (240 aa)) form the Radical SAM core domain. Cys-122 and Cys-359 form a disulfide bridge. 3 residues coordinate [4Fe-4S] cluster: Cys-129, Cys-133, and Cys-136. S-adenosyl-L-methionine contacts are provided by residues 183-184 (GE), Ser-215, 237-239 (SLH), and Asn-316. Cys-359 acts as the S-methylcysteine intermediate in catalysis.

This sequence belongs to the radical SAM superfamily. RlmN family. [4Fe-4S] cluster serves as cofactor.

It is found in the cytoplasm. The catalysed reaction is adenosine(2503) in 23S rRNA + 2 reduced [2Fe-2S]-[ferredoxin] + 2 S-adenosyl-L-methionine = 2-methyladenosine(2503) in 23S rRNA + 5'-deoxyadenosine + L-methionine + 2 oxidized [2Fe-2S]-[ferredoxin] + S-adenosyl-L-homocysteine. It catalyses the reaction adenosine(37) in tRNA + 2 reduced [2Fe-2S]-[ferredoxin] + 2 S-adenosyl-L-methionine = 2-methyladenosine(37) in tRNA + 5'-deoxyadenosine + L-methionine + 2 oxidized [2Fe-2S]-[ferredoxin] + S-adenosyl-L-homocysteine. Specifically methylates position 2 of adenine 2503 in 23S rRNA and position 2 of adenine 37 in tRNAs. m2A2503 modification seems to play a crucial role in the proofreading step occurring at the peptidyl transferase center and thus would serve to optimize ribosomal fidelity. This Cronobacter sakazakii (strain ATCC BAA-894) (Enterobacter sakazakii) protein is Dual-specificity RNA methyltransferase RlmN.